Here is a 310-residue protein sequence, read N- to C-terminus: Light-independent protochlorophyllide reductase iron-sulfur ATP-binding protein (310 aa).

ATP contacts are provided by residues 53-58 (GIGKST) and Lys-82. Mg(2+) is bound at residue Ser-57. Residues Cys-138 and Cys-172 each contribute to the [4Fe-4S] cluster site. ATP is bound by residues 223-224 (NR) and 247-249 (PAL).

This sequence belongs to the NifH/BchL/ChlL family. As to quaternary structure, homodimer. Protochlorophyllide reductase is composed of three subunits; BchL, BchN and BchB. It depends on [4Fe-4S] cluster as a cofactor.

The enzyme catalyses chlorophyllide a + oxidized 2[4Fe-4S]-[ferredoxin] + 2 ADP + 2 phosphate = protochlorophyllide a + reduced 2[4Fe-4S]-[ferredoxin] + 2 ATP + 2 H2O. Its pathway is porphyrin-containing compound metabolism; bacteriochlorophyll biosynthesis (light-independent). In terms of biological role, component of the dark-operative protochlorophyllide reductase (DPOR) that uses Mg-ATP and reduced ferredoxin to reduce ring D of protochlorophyllide (Pchlide) to form chlorophyllide a (Chlide). This reaction is light-independent. The L component serves as a unique electron donor to the NB-component of the complex, and binds Mg-ATP. The protein is Light-independent protochlorophyllide reductase iron-sulfur ATP-binding protein of Rhodopseudomonas palustris (strain BisA53).